The chain runs to 325 residues: Probable cell division protein WhiA (325 aa).

Residues 273–306 (SLEELGALADPPLTKDAVAGRIRRLLALADKRAN) constitute a DNA-binding region (H-T-H motif).

It belongs to the WhiA family.

Functionally, involved in cell division and chromosome segregation. The sequence is that of Probable cell division protein WhiA from Frankia casuarinae (strain DSM 45818 / CECT 9043 / HFP020203 / CcI3).